Here is a 311-residue protein sequence, read N- to C-terminus: Porphobilinogen deaminase (311 aa).

The residue at position 242 (Cys242) is an S-(dipyrrolylmethanemethyl)cysteine.

The protein belongs to the HMBS family. As to quaternary structure, monomer. The cofactor is dipyrromethane.

It carries out the reaction 4 porphobilinogen + H2O = hydroxymethylbilane + 4 NH4(+). Its pathway is porphyrin-containing compound metabolism; protoporphyrin-IX biosynthesis; coproporphyrinogen-III from 5-aminolevulinate: step 2/4. Tetrapolymerization of the monopyrrole PBG into the hydroxymethylbilane pre-uroporphyrinogen in several discrete steps. This chain is Porphobilinogen deaminase (hemC), found in Neisseria meningitidis serogroup B (strain ATCC BAA-335 / MC58).